Here is a 308-residue protein sequence, read N- to C-terminus: Aspartate carbamoyltransferase catalytic subunit (308 aa).

2 residues coordinate carbamoyl phosphate: R59 and T60. Residue K87 participates in L-aspartate binding. Carbamoyl phosphate contacts are provided by R109, H139, and Q142. Positions 172 and 224 each coordinate L-aspartate. Carbamoyl phosphate contacts are provided by A265 and P266.

This sequence belongs to the aspartate/ornithine carbamoyltransferase superfamily. ATCase family. Heterododecamer (2C3:3R2) of six catalytic PyrB chains organized as two trimers (C3), and six regulatory PyrI chains organized as three dimers (R2).

It carries out the reaction carbamoyl phosphate + L-aspartate = N-carbamoyl-L-aspartate + phosphate + H(+). It functions in the pathway pyrimidine metabolism; UMP biosynthesis via de novo pathway; (S)-dihydroorotate from bicarbonate: step 2/3. In terms of biological role, catalyzes the condensation of carbamoyl phosphate and aspartate to form carbamoyl aspartate and inorganic phosphate, the committed step in the de novo pyrimidine nucleotide biosynthesis pathway. This Streptococcus thermophilus (strain ATCC BAA-491 / LMD-9) protein is Aspartate carbamoyltransferase catalytic subunit.